The primary structure comprises 727 residues: NADH-ubiquinone oxidoreductase 75 kDa subunit, mitochondrial (727 aa).

The N-terminal 23 residues, 1 to 23 (MLRIPVRKALVGLSKSSKGCVRT), are a transit peptide targeting the mitochondrion. The 2Fe-2S ferredoxin-type domain occupies 30–108 (NLIEVFVDGQ…GWNILTNSEK (79 aa)). [2Fe-2S] cluster-binding residues include Cys-64, Cys-75, and Cys-78. Lys-84 bears the N6-acetyllysine mark. Cys-92 contributes to the [2Fe-2S] cluster binding site. One can recognise a 4Fe-4S His(Cys)3-ligated-type domain in the interval 108–147 (KTKKAREGVMEFLLANHPLDCPICDQGGECDLQDQSMMFG). 8 residues coordinate [4Fe-4S] cluster: His-124, Cys-128, Cys-131, Cys-137, Cys-176, Cys-179, Cys-182, and Cys-226. Residues 245–301 (TRKTESIDVMDAVGSNIVVSTRTGEVMRILPRMHEDINEEWISDKTRFAYDGLKRQR) form the 4Fe-4S Mo/W bis-MGD-type domain. 2 positions are modified to N6-acetyllysine: Lys-499 and Lys-709.

The protein belongs to the complex I 75 kDa subunit family. Core subunit of respiratory chain NADH dehydrogenase (Complex I) which is composed of 45 different subunits. This is the largest subunit of complex I and it is a component of the iron-sulfur (IP) fragment of the enzyme. Complex I associates with ubiquinol-cytochrome reductase complex (Complex III) to form supercomplexes. Interacts with MDM2 and AKAP1. Requires [2Fe-2S] cluster as cofactor. [4Fe-4S] cluster serves as cofactor.

The protein localises to the mitochondrion inner membrane. It carries out the reaction a ubiquinone + NADH + 5 H(+)(in) = a ubiquinol + NAD(+) + 4 H(+)(out). Its function is as follows. Core subunit of the mitochondrial membrane respiratory chain NADH dehydrogenase (Complex I) which catalyzes electron transfer from NADH through the respiratory chain, using ubiquinone as an electron acceptor. Essential for catalysing the entry and efficient transfer of electrons within complex I. Plays a key role in the assembly and stability of complex I and participates in the association of complex I with ubiquinol-cytochrome reductase complex (Complex III) to form supercomplexes. The protein is NADH-ubiquinone oxidoreductase 75 kDa subunit, mitochondrial (NDUFS1) of Bos taurus (Bovine).